The chain runs to 257 residues: Pimeloyl-[acyl-carrier protein] methyl ester esterase (257 aa).

Positions 16–240 constitute an AB hydrolase-1 domain; it reads LVLIHGWGMN…EQASHAPFIS (225 aa). Residues Trp22, 82–83, and 143–147 contribute to the substrate site; these read SL and FMALQ. Ser82 serves as the catalytic Nucleophile. Active-site residues include Asp207 and His235. His235 lines the substrate pocket.

It belongs to the AB hydrolase superfamily. Carboxylesterase BioH family. As to quaternary structure, monomer.

It is found in the cytoplasm. The catalysed reaction is 6-carboxyhexanoyl-[ACP] methyl ester + H2O = 6-carboxyhexanoyl-[ACP] + methanol + H(+). Its pathway is cofactor biosynthesis; biotin biosynthesis. Its function is as follows. The physiological role of BioH is to remove the methyl group introduced by BioC when the pimeloyl moiety is complete. It allows to synthesize pimeloyl-ACP via the fatty acid synthetic pathway through the hydrolysis of the ester bonds of pimeloyl-ACP esters. This is Pimeloyl-[acyl-carrier protein] methyl ester esterase from Aliivibrio fischeri (strain ATCC 700601 / ES114) (Vibrio fischeri).